We begin with the raw amino-acid sequence, 299 residues long: Small ribosomal subunit protein uS2 (299 aa).

Positions 210-299 are disordered; that stretch reads AEKEEQTQVV…GAATDNSWAS (90 aa). Residues 275–285 are compositionally biased toward polar residues; sequence WASTGTATVGP.

It belongs to the universal ribosomal protein uS2 family. In terms of assembly, component of the small ribosomal subunit. Mature ribosomes consist of a small (40S) and a large (60S) subunit. The 40S subunit contains about 33 different proteins and 1 molecule of RNA (18S). The 60S subunit contains about 49 different proteins and 3 molecules of RNA (28S, 5.8S and 5S). Interacts with ribosomal protein S21.

The protein localises to the cytoplasm. In terms of biological role, required for the assembly and/or stability of the 40S ribosomal subunit. Required for the processing of the 20S rRNA-precursor to mature 18S rRNA in a late step of the maturation of 40S ribosomal subunits. In Ornithodoros parkeri (Soft tick), this protein is Small ribosomal subunit protein uS2.